Reading from the N-terminus, the 1483-residue chain is Chromosome partition protein MukB (1483 aa).

34-41 (GGNGAGKS) serves as a coordination point for ATP. Coiled coils occupy residues 311 to 426 (EMAR…LQRA) and 547 to 607 (GQQV…WLAA). Positions 666-783 (PGGSEDARLN…KVPLFGRAAR (118 aa)) are flexible hinge. Coiled coils occupy residues 835–1115 (EAAL…SAKA) and 1206–1266 (DDPV…QAVS). The disordered stretch occupies residues 850 to 870 (RELNNHESENQQQRQQYEQAK).

Belongs to the SMC family. MukB subfamily. As to quaternary structure, homodimerization via its hinge domain. Binds to DNA via its C-terminal region. Interacts, and probably forms a ternary complex, with MukE and MukF via its C-terminal region. The complex formation is stimulated by calcium or magnesium. Interacts with tubulin-related protein FtsZ.

The protein localises to the cytoplasm. It is found in the nucleoid. Plays a central role in chromosome condensation, segregation and cell cycle progression. Functions as a homodimer, which is essential for chromosome partition. Involved in negative DNA supercoiling in vivo, and by this means organize and compact chromosomes. May achieve or facilitate chromosome segregation by condensation DNA from both sides of a centrally located replisome during cell division. The polypeptide is Chromosome partition protein MukB (Erwinia tasmaniensis (strain DSM 17950 / CFBP 7177 / CIP 109463 / NCPPB 4357 / Et1/99)).